The chain runs to 174 residues: Endoribonuclease YbeY (174 aa).

Zn(2+) contacts are provided by His133, His137, and His143.

Belongs to the endoribonuclease YbeY family. Zn(2+) is required as a cofactor.

It localises to the cytoplasm. Functionally, single strand-specific metallo-endoribonuclease involved in late-stage 70S ribosome quality control and in maturation of the 3' terminus of the 16S rRNA. The sequence is that of Endoribonuclease YbeY from Paracoccus denitrificans (strain Pd 1222).